The primary structure comprises 429 residues: Palmitoyltransferase ZDHHC23 (429 aa).

Topologically, residues 1-81 (MKPVKKKKTE…RIPWLRGAKK (81 aa)) are cytoplasmic. Residues 82–102 (VNISILPPLVLLPVLLRVASW) form a helical membrane-spanning segment. Residue histidine 103 is a topological domain, lumenal. Residues 104–124 (FLLGVVVLTSLPMLALWYYYL) traverse the membrane as a helical segment. Over 125 to 130 (THRRKE) the chain is Cytoplasmic. Residues 131 to 151 (QTLFFLSLGLFSLGYMYYVFL) traverse the membrane as a helical segment. The Lumenal portion of the chain corresponds to 152–159 (QEVVPQGH). The chain crosses the membrane as a helical span at residues 160–180 (VGPAQLALLTCGLFLILVALY). Over 181-296 (RAKKNPGYLS…NSCVGESNHQ (116 aa)) the chain is Cytoplasmic. The tract at residues 212-247 (QEKTKGFPGTDTSGSLNNRTLKDDAKGSSRVGLDSP) is disordered. Over residues 221-230 (TDTSGSLNNR) the composition is skewed to polar residues. The 51-residue stretch at 253–303 (DWCAKCQLVRPARAWHCRICGICVRRMDHHCVWINSCVGESNHQAFILALS) folds into the DHHC domain. The active-site S-palmitoyl cysteine intermediate is cysteine 283. A helical membrane pass occupies residues 297–317 (AFILALSIFLLTSVYGISLTL). The Lumenal segment spans residues 318 to 347 (NTICRDRSLFTALFYCPGVYANYSSALSFT). The helical transmembrane segment at 348-368 (CVWYSVIITAGMAYIFLIQLI) threads the bilayer. At 369–429 (NISYNVTERE…TVHTPAEDIV (61 aa)) the chain is on the cytoplasmic side. An interaction with NOS1 region spans residues 426 to 429 (EDIV).

This sequence belongs to the DHHC palmitoyltransferase family. As to quaternary structure, interacts with NOS1. As to expression, expressed in the brain (at protein level), with highest levels in olfactory bulb, piriform cortex and hippocampus.

It is found in the golgi apparatus membrane. The protein localises to the golgi apparatus. Its subcellular location is the trans-Golgi network membrane. It carries out the reaction L-cysteinyl-[protein] + hexadecanoyl-CoA = S-hexadecanoyl-L-cysteinyl-[protein] + CoA. Functionally, palmitoyltransferase that could catalyze the addition of palmitate onto various protein substrates and be involved in a variety of cellular processes. Palmitoyltransferase that mediates palmitoylation of KCNMA1, regulating localization of KCNMA1 to the plasma membrane. May be involved in NOS1 regulation and targeting to the synaptic membrane. This is Palmitoyltransferase ZDHHC23 from Rattus norvegicus (Rat).